The primary structure comprises 616 residues: Protein cereblon (616 aa).

3 disordered regions span residues Met1–Val39, Phe63–Arg137, and Ser182–Met220. Low complexity predominate over residues Ala11–Val32. The span at Ser96–Glu107 shows a compositional bias: acidic residues. Over residues Gln183–Asp192 the composition is skewed to basic and acidic residues. Residues Val194–Leu203 show a composition bias toward acidic residues. Pro residues predominate over residues His206 to Pro215. Residues His257–Thr482 enclose the Lon N-terminal domain. The region spanning Glu481–Lys590 is the CULT domain. The Zn(2+) site is built by Cys486, Cys489, Cys555, and Cys558.

Belongs to the CRBN family. In terms of assembly, likely a component of a DCX (DDB1-CUL4-X-box) protein ligase complex. May interact with pic/DDB1. In terms of processing, ubiquitinated.

It localises to the nucleus. The protein operates within protein modification; protein ubiquitination. Functionally, substrate recognition component of a DCX (DDB1-CUL4-X-box) E3 protein ligase complex that mediates the ubiquitination and subsequent proteasomal degradation of target proteins. Has an essential role in mediating growth by negatively regulating insulin signaling. It also has a role in maintaining presynaptic function in the neuromuscular junction synapses of third-instar larvae. The polypeptide is Protein cereblon (Drosophila pseudoobscura pseudoobscura (Fruit fly)).